The chain runs to 98 residues: C-X-C motif chemokine 10 (98 aa).

An N-terminal signal peptide occupies residues 1–21; it reads MNQTAILICCLVFLTLSGIQG. Citrulline is present on arginine 26. Cystine bridges form between cysteine 30–cysteine 57 and cysteine 32–cysteine 74.

It belongs to the intercrine alpha (chemokine CxC) family.

The protein localises to the secreted. In terms of biological role, chemotactic for monocytes and T-lymphocytes. Binds to CXCR3. In Macaca nemestrina (Pig-tailed macaque), this protein is C-X-C motif chemokine 10 (CXCL10).